Consider the following 155-residue polypeptide: Ribosomal RNA large subunit methyltransferase H (155 aa).

S-adenosyl-L-methionine contacts are provided by residues Leu73, Gly104, and 123 to 128 (LSPLTL).

The protein belongs to the RNA methyltransferase RlmH family. In terms of assembly, homodimer.

It localises to the cytoplasm. It catalyses the reaction pseudouridine(1915) in 23S rRNA + S-adenosyl-L-methionine = N(3)-methylpseudouridine(1915) in 23S rRNA + S-adenosyl-L-homocysteine + H(+). Its function is as follows. Specifically methylates the pseudouridine at position 1915 (m3Psi1915) in 23S rRNA. The protein is Ribosomal RNA large subunit methyltransferase H of Pseudomonas aeruginosa (strain LESB58).